Reading from the N-terminus, the 674-residue chain is Dystrophia myotonica WD repeat-containing protein (674 aa).

N-acetylalanine is present on Ala2. Disordered regions lie at residues 31–92 and 103–122; these read GFYK…PALP and EPDS…LGSG. Positions 53–65 are enriched in pro residues; it reads PVPPQPPQPPPGP. Residues 66 to 77 show a composition bias toward low complexity; it reads ASASGPGAAGPA. A compositionally biased stretch (pro residues) spans 78-90; it reads SSPPPAGPGPGPA. Over residues 107–118 the composition is skewed to low complexity; that stretch reads AGAGEPPATPAG. WD repeat units lie at residues 211–251, 282–321, 324–363, 366–409, and 413–453; these read IDKT…ASAP, VGEG…LRGL, SYFG…VVAR, GHKS…EAAG, and AGGA…LYPH. Disordered stretches follow at residues 384 to 419, 456 to 516, 532 to 573, and 637 to 674; these read EEAA…APLS, LART…EPGT, RDRG…RSRL, and DEET…GTVV. Composition is skewed to low complexity over residues 457–478 and 487–499; these read ARTR…SSRG and PRSL…LPHP. Ser495 is subject to Phosphoserine. Gly residues-rich tracts occupy residues 500 to 509 and 550 to 563; these read AGGGKAGGPG and SRGG…GGEK. Arg551 carries the omega-N-methylarginine modification. The WD 6 repeat unit spans residues 601–638; it reads IAQERLTVLLFLEDCIITACQEGLICTWARPGKAFTDE. Positions 642–674 are enriched in polar residues; that stretch reads AQTGEGSWPRSPSKSVVEGISSQPGNSPSGTVV.

As to quaternary structure, component of the USP12/DMWD/WDR48 deubiquitinating complex. Interacts with USP12; promotes its enzymatic activity. Interacts with USP46.

It is found in the cytoplasm. Its subcellular location is the nucleus. The protein resides in the perikaryon. It localises to the cell projection. The protein localises to the dendrite. Regulator of the deubiquitinating USP12/DMWD/WDR48 complex. Functions as a cofactor that promotes USP12 enzymatic activity. The protein is Dystrophia myotonica WD repeat-containing protein of Homo sapiens (Human).